A 115-amino-acid chain; its full sequence is Large ribosomal subunit protein bL19 (115 aa).

Belongs to the bacterial ribosomal protein bL19 family.

This protein is located at the 30S-50S ribosomal subunit interface and may play a role in the structure and function of the aminoacyl-tRNA binding site. The chain is Large ribosomal subunit protein bL19 from Escherichia coli O139:H28 (strain E24377A / ETEC).